Reading from the N-terminus, the 341-residue chain is Small ribosomal subunit protein uS3 (341 aa).

One can recognise a KH type-2 domain in the interval 38 to 106 (IRRMMTRGME…QVQLNILEVK (69 aa)). Disordered regions lie at residues 224–246 (RAVR…LETA) and 274–341 (PAGQ…TKEG). Composition is skewed to low complexity over residues 285-303 (AEQP…VTGE) and 311-333 (AAPA…DAPS).

The protein belongs to the universal ribosomal protein uS3 family. As to quaternary structure, part of the 30S ribosomal subunit. Forms a tight complex with proteins S10 and S14.

Binds the lower part of the 30S subunit head. Binds mRNA in the 70S ribosome, positioning it for translation. This Acidothermus cellulolyticus (strain ATCC 43068 / DSM 8971 / 11B) protein is Small ribosomal subunit protein uS3.